The sequence spans 301 residues: NADH-cytochrome b5 reductase 3 (301 aa).

Residue Gly-2 is the site of N-myristoyl glycine attachment. Residues 40 to 152 (DIKYPLRLID…RGPNGLLVYQ (113 aa)) form the FAD-binding FR-type domain. N6-acetyllysine is present on Lys-42. A Phosphotyrosine modification is found at Tyr-43. Lys-50 bears the N6-acetyllysine mark. Residues Arg-92, Pro-93, Tyr-94, Val-109, Lys-111, and Phe-114 each coordinate FAD. At Lys-120 the chain carries N6-acetyllysine. Lys-126, Met-127, Ser-128, and Thr-185 together coordinate FAD.

This sequence belongs to the flavoprotein pyridine nucleotide cytochrome reductase family. Component of a complex composed of cytochrome b5, NADH-cytochrome b5 reductase (CYB5R3) and MTARC2. Interacts with MTLN; the interaction is required to maintain cellular lipid composition and leads to stimulation of mitochondrial respiratory complex I activity. FAD serves as cofactor.

It localises to the endoplasmic reticulum membrane. The protein localises to the mitochondrion outer membrane. It catalyses the reaction 2 Fe(III)-[cytochrome b5] + NADH = 2 Fe(II)-[cytochrome b5] + NAD(+) + H(+). Its function is as follows. Catalyzes the reduction of two molecules of cytochrome b5 using NADH as the electron donor. This Mus musculus (Mouse) protein is NADH-cytochrome b5 reductase 3.